Reading from the N-terminus, the 688-residue chain is Elongation factor G (688 aa).

Positions 8-282 (EKFRNIGIMA…AVVDFMPSPL (275 aa)) constitute a tr-type G domain. GTP is bound by residues 17–24 (AHIDAGKT), 81–85 (DTPGH), and 135–138 (NKMD). The segment at 282–305 (LDIPPIKGTDPETGEETDRPADDN) is disordered.

Belongs to the TRAFAC class translation factor GTPase superfamily. Classic translation factor GTPase family. EF-G/EF-2 subfamily.

It is found in the cytoplasm. In terms of biological role, catalyzes the GTP-dependent ribosomal translocation step during translation elongation. During this step, the ribosome changes from the pre-translocational (PRE) to the post-translocational (POST) state as the newly formed A-site-bound peptidyl-tRNA and P-site-bound deacylated tRNA move to the P and E sites, respectively. Catalyzes the coordinated movement of the two tRNA molecules, the mRNA and conformational changes in the ribosome. This chain is Elongation factor G, found in Clostridium kluyveri (strain NBRC 12016).